The chain runs to 306 residues: Protein pxr1 (306 aa).

A compositionally biased stretch (basic residues) spans 1-11 (MGLAAPRKRTK). Disordered regions lie at residues 1-27 (MGLA…STSG) and 148-241 (AQKE…SDIP). The segment covering 15–27 (DPNNTNWSRSTSG) has biased composition (polar residues). Positions 25–79 (TSGYGHKIMSSQGWTPGSFLGARNAAHADMFTAASASHIRVVVKDDTLGLGARSK) constitute a G-patch domain. Residues 182–191 (NTLKALREEQ) show a composition bias toward basic and acidic residues. Residues 219-228 (KKERKTKKRK) are compositionally biased toward basic residues.

The protein belongs to the PINX1 family.

The protein localises to the nucleus. It localises to the nucleolus. In terms of biological role, involved in rRNA-processing at A0, A1 and A2 sites and negatively regulates telomerase. This Aspergillus oryzae (strain ATCC 42149 / RIB 40) (Yellow koji mold) protein is Protein pxr1 (pxr1).